Consider the following 96-residue polypeptide: Transcription and mRNA export factor SUS1 (96 aa).

Residue Lys-68 forms a Glycyl lysine isopeptide (Lys-Gly) (interchain with G-Cter in ubiquitin) linkage.

This sequence belongs to the ENY2 family. In terms of assembly, component of the nuclear pore complex (NPC)-associated TREX-2 complex (transcription and export complex 2), composed of at least SUS1, SAC3, THP1, SEM1, and CDC31. TREX-2 contains 2 SUS1 chains. The TREX-2 complex interacts with the nucleoporin NUP1. Component of the 1.8 MDa SAGA transcription coactivator-HAT complex. SAGA is built of 5 distinct domains with specialized functions. Within the SAGA complex, SUS1, SGF11, SGF73 and UBP8 form an additional subcomplex of SAGA called the DUB module (deubiquitination module). Interacts directly with THP1, SAC3, SGF11, and with the RNA polymerase II.

Its subcellular location is the nucleus. It localises to the nucleoplasm. The protein resides in the cytoplasm. The protein localises to the P-body. Involved in mRNA export coupled transcription activation by association with both the TREX-2 and the SAGA complexes. At the promoters, SAGA is required for recruitment of the basal transcription machinery. It influences RNA polymerase II transcriptional activity through different activities such as TBP interaction and promoter selectivity, interaction with transcription activators, and chromatin modification through histone acetylation and deubiquitination. Within the SAGA complex, participates in a subcomplex required for deubiquitination of H2B and for the maintenance of steady-state H3 methylation levels. The TREX-2 complex functions in docking export-competent ribonucleoprotein particles (mRNPs) to the nuclear entrance of the nuclear pore complex (nuclear basket). TREX-2 participates in mRNA export and accurate chromatin positioning in the nucleus by tethering genes to the nuclear periphery. May also be involved in cytoplasmic mRNA decay by interaction with components of P-bodies. This is Transcription and mRNA export factor SUS1 from Saccharomyces cerevisiae (strain YJM789) (Baker's yeast).